A 206-amino-acid polypeptide reads, in one-letter code: Small ribosomal subunit protein uS4 (206 aa).

Positions 25 to 39 (DKLLDRKPNGPGKER) are enriched in basic and acidic residues. The interval 25–49 (DKLLDRKPNGPGKERGARKRGKTSV) is disordered. Residues 95-157 (QRLDNTIYRM…KGIQNLIRHN (63 aa)) enclose the S4 RNA-binding domain.

Belongs to the universal ribosomal protein uS4 family. Part of the 30S ribosomal subunit. Contacts protein S5. The interaction surface between S4 and S5 is involved in control of translational fidelity.

One of the primary rRNA binding proteins, it binds directly to 16S rRNA where it nucleates assembly of the body of the 30S subunit. Functionally, with S5 and S12 plays an important role in translational accuracy. This Treponema denticola (strain ATCC 35405 / DSM 14222 / CIP 103919 / JCM 8153 / KCTC 15104) protein is Small ribosomal subunit protein uS4.